Reading from the N-terminus, the 37-residue chain is Large ribosomal subunit protein bL36 (37 aa).

Belongs to the bacterial ribosomal protein bL36 family.

This chain is Large ribosomal subunit protein bL36, found in Moorella thermoacetica (strain ATCC 39073 / JCM 9320).